The primary structure comprises 244 residues: uncharacterized protein (244 aa).

It belongs to the MtxX family.

This is an uncharacterized protein from Methanocaldococcus jannaschii (strain ATCC 43067 / DSM 2661 / JAL-1 / JCM 10045 / NBRC 100440) (Methanococcus jannaschii).